We begin with the raw amino-acid sequence, 115 residues long: Large ribosomal subunit protein uL24 (115 aa).

This sequence belongs to the universal ribosomal protein uL24 family. As to quaternary structure, part of the 50S ribosomal subunit.

Its function is as follows. One of two assembly initiator proteins, it binds directly to the 5'-end of the 23S rRNA, where it nucleates assembly of the 50S subunit. Functionally, one of the proteins that surrounds the polypeptide exit tunnel on the outside of the subunit. This Beutenbergia cavernae (strain ATCC BAA-8 / DSM 12333 / CCUG 43141 / JCM 11478 / NBRC 16432 / NCIMB 13614 / HKI 0122) protein is Large ribosomal subunit protein uL24.